The chain runs to 904 residues: Anoctamin-5 (904 aa).

Residues 1–290 (MVEQEGLTAK…HLIRNYFGEK (290 aa)) lie on the Cytoplasmic side of the membrane. The chain crosses the membrane as a helical span at residues 291-311 (IGIYFVFLGYYTEMLLFAALV). At 312-371 (GLACFIYGLLSMENNRTSTEICDPDIGGQMIMCPLCDEVCDYWRLNTTCLHSKFSHLFDN) the chain is on the extracellular side. N-linked (GlcNAc...) asparagine glycosylation is found at Asn326, Asn357, and Asn371. Residues 372 to 392 (ESTVFFALFMGIWVTLFLEFW) form a helical membrane-spanning segment. Over 393–453 (KQRQARLEYE…CHRIPWYFVS (61 aa)) the chain is Cytoplasmic. A helical membrane pass occupies residues 454–474 (GTTVTFGMALLLSSMVSILIY). Over 475-502 (RLSVFATFASFMESEATLQSVKSFFTPQ) the chain is Extracellular. A helical membrane pass occupies residues 503–523 (LATALSGSCLNCIVILILNFF). Topologically, residues 524 to 548 (YEKISAWITKMEIPRTHQEYESSLT) are cytoplasmic. The chain crosses the membrane as a helical span at residues 549–569 (LKMFLFQFVNYYSSCFYVAFF). Topologically, residues 570–667 (KGKFVGYPGS…RGLFYEYLET (98 aa)) are extracellular. The chain crosses the membrane as a helical span at residues 668-688 (VIQFGFATLFVASFPLAPLFA). The Cytoplasmic portion of the chain corresponds to 689 to 723 (LMNNIMGIRVDAWKLTTQYRRPVAAKAHSIGVWQD). A helical transmembrane segment spans residues 724 to 744 (ILFGMAIVSVATNAFIVSFTS). Residues 745–825 (DIIPRLVYFY…FWHVLAAKMT (81 aa)) are Extracellular-facing. 3 N-linked (GlcNAc...) asparagine glycosylation sites follow: Asn759, Asn769, and Asn782. A helical membrane pass occupies residues 826 to 846 (FIIVMEHVVFLFKFLLAWLIP). The Cytoplasmic portion of the chain corresponds to 847–904 (DVPKDVVEKIKREKLMTIKIIHDFELNKLKENLDVEYGNIMKNVLVDEDNSLKAKTTV).

This sequence belongs to the anoctamin family. In terms of tissue distribution, highly expressed in skeletal muscle, bone tissues and thyroid gland.

The protein localises to the endoplasmic reticulum membrane. The protein resides in the cell membrane. Its function is as follows. Plays a role in plasma membrane repair in a process involving annexins. Does not exhibit calcium-activated chloride channel (CaCC) activity. This is Anoctamin-5 (Ano5) from Mus musculus (Mouse).